We begin with the raw amino-acid sequence, 192 residues long: Imidazoleglycerol-phosphate dehydratase (192 aa).

It belongs to the imidazoleglycerol-phosphate dehydratase family.

The protein localises to the cytoplasm. It catalyses the reaction D-erythro-1-(imidazol-4-yl)glycerol 3-phosphate = 3-(imidazol-4-yl)-2-oxopropyl phosphate + H2O. It functions in the pathway amino-acid biosynthesis; L-histidine biosynthesis; L-histidine from 5-phospho-alpha-D-ribose 1-diphosphate: step 6/9. The protein is Imidazoleglycerol-phosphate dehydratase of Vesicomyosocius okutanii subsp. Calyptogena okutanii (strain HA).